The primary structure comprises 82 residues: Conotoxin C11GB (82 aa).

A signal peptide spans 1 to 22 (MKLTCVMIVAVLFLTAWTVVTA). A propeptide spanning residues 23–53 (EPHSSNVLENLYLKAHHEMENPEASKLNTRD) is cleaved from the precursor. Cystine bridges form between C55–C72, C62–C76, and C71–C80.

This sequence belongs to the conotoxin O1 superfamily. As to expression, expressed by the venom duct.

The protein localises to the secreted. This chain is Conotoxin C11GB, found in Conus vexillum (Flag cone).